The sequence spans 524 residues: MSWYSVDSEIESLERRHAGHHHTVNIKYGYVILALSIVHMVLSISGKKLYFKNWAETGRASSWWRSVVSIPFWVSTLVWLAIFAFLSIFHIEELSENYTTAVKRLGRMAYCLVPFTIFISLRPPNTVGYQSGYYLEKLNLHKWISRLIFATAIGHGLGFLYKWTKEGALAEKIFKFDNFLGVTVFALMPVLIFASVNVMRRRNYRLFYILHNVTLWMFVVLIAFHARPGVPLLAVINLALLGYQIYQRFFKSYYLHDISVVESPYSKMQIIRIPRPETFPSYLPGSHIRLGYSATNISAWLYATHPFTIASTNDDSESTLDLVMNKPVNFPIDITSPYTMTGPFPSLPPQFYTTARHVNIICGGSGISFGLPIYKYFVNSNRSIPIRLIWCIRSSDDTFILDHLLPERSIDVQIYITSNTGSLNQQQSASTIFDEEADALLEGDSTTNIEMANLATDKEEKKTDHFNTIHDGRPNFDDAFGNLAAAVDVDEKWLIACGPRKLIDDCRKWTKGKDIEFYSELYEM.

Transmembrane regions (helical) follow at residues 24–44, 69–89, 104–121, 143–163, 179–199, 206–226, and 230–250; these read VNIKYGYVILALSIVHMVLSI, SIPFWVSTLVWLAIFAFLSIF, RLGRMAYCLVPFTIFISL, WISRLIFATAIGHGLGFLYKW, FLGVTVFALMPVLIFASVNVM, LFYILHNVTLWMFVVLIAFHA, and VPLLAVINLALLGYQIYQRFF. The 118-residue stretch at 105-222 folds into the Ferric oxidoreductase domain; it reads LGRMAYCLVP…VTLWMFVVLI (118 aa). The region spanning 248 to 372 is the FAD-binding FR-type domain; the sequence is RFFKSYYLHD…GGSGISFGLP (125 aa).

Belongs to the ferric reductase (FRE) family. AIM14 subfamily.

The protein resides in the membrane. Its function is as follows. Probable cell surface metalloreductase. May be involved in iron or copper homeostasis. The chain is Probable metalloreductase AIM14 (AIM14) from Scheffersomyces stipitis (strain ATCC 58785 / CBS 6054 / NBRC 10063 / NRRL Y-11545) (Yeast).